The chain runs to 379 residues: Probable peptidoglycan glycosyltransferase FtsW (379 aa).

Residues 1–15 (MHKTEAQTYLLYDRT) are Cytoplasmic-facing. A helical transmembrane segment spans residues 16-36 (LLLLTMGLVGIGLVMVISTSM). The Periplasmic segment spans residues 37–52 (PIGVRLSEDPFYFARR). A helical membrane pass occupies residues 53 to 73 (YAFYLGLAVVLSLVTLGIPMA). Topologically, residues 74–79 (SWQRGS) are cytoplasmic. Residues 80-100 (SLILLITLIMLLLVLIAGQSV) traverse the membrane as a helical segment. Topologically, residues 101–113 (NGAVRWLALGPWR) are periplasmic. A helical membrane pass occupies residues 114–133 (IQPAELSKLALFCYLASYLV). The Cytoplasmic segment spans residues 134 to 139 (RKAEEV). Residues 140-162 (RTNFWGFCKPIGVMVLLAILLLA) traverse the membrane as a helical segment. Topologically, residues 163 to 165 (QPD) are periplasmic. A helical membrane pass occupies residues 166 to 183 (LGTVLVLFITTLAMLFLA). Topologically, residues 184-186 (EAK) are cytoplasmic. A helical transmembrane segment spans residues 187–207 (IWQFLPIIGTGILAVMLLIIA). At 208-269 (KPYRRRRVTS…TEAHTDFICS (62 aa)) the chain is on the periplasmic side. The helical transmembrane segment at 270 to 290 (ILGEELGYFGVLLALLMVFLV) threads the bilayer. Over 291-301 (AFRAMSIGRKA) the chain is Cytoplasmic. A helical transmembrane segment spans residues 302 to 322 (LAINQIFSGFLACSIGIWFSF). Topologically, residues 323–342 (QTMVNVGAAAGMLPTKGLTL) are periplasmic. Residues 343 to 363 (PFISYGGSSMLIMLTAIVLLI) traverse the membrane as a helical segment. Residues 364–379 (RIDFETRLAKLQAFVR) are Cytoplasmic-facing.

The protein belongs to the SEDS family. FtsW subfamily.

Its subcellular location is the cell inner membrane. It catalyses the reaction [GlcNAc-(1-&gt;4)-Mur2Ac(oyl-L-Ala-gamma-D-Glu-L-Lys-D-Ala-D-Ala)](n)-di-trans,octa-cis-undecaprenyl diphosphate + beta-D-GlcNAc-(1-&gt;4)-Mur2Ac(oyl-L-Ala-gamma-D-Glu-L-Lys-D-Ala-D-Ala)-di-trans,octa-cis-undecaprenyl diphosphate = [GlcNAc-(1-&gt;4)-Mur2Ac(oyl-L-Ala-gamma-D-Glu-L-Lys-D-Ala-D-Ala)](n+1)-di-trans,octa-cis-undecaprenyl diphosphate + di-trans,octa-cis-undecaprenyl diphosphate + H(+). It participates in cell wall biogenesis; peptidoglycan biosynthesis. Peptidoglycan polymerase that is essential for cell division. The polypeptide is Probable peptidoglycan glycosyltransferase FtsW (Moranella endobia (strain PCIT)).